Here is a 303-residue protein sequence, read N- to C-terminus: Coenzyme PQQ synthesis protein B (303 aa).

The protein belongs to the PqqB family.

It participates in cofactor biosynthesis; pyrroloquinoline quinone biosynthesis. Functionally, may be involved in the transport of PQQ or its precursor to the periplasm. The protein is Coenzyme PQQ synthesis protein B of Pseudomonas syringae pv. tomato (strain ATCC BAA-871 / DC3000).